The sequence spans 151 residues: Protein A151R (151 aa).

Histidine 102, cysteine 109, cysteine 132, and cysteine 135 together coordinate Zn(2+). The Thioredoxin WCTKC motif motif lies at 131–135 (WCTKC).

The protein belongs to the asfivirus A151R family. Monomer. Homodimer. Interacts with protein B119L. Interacts with membrane protein E248R. Requires Zn(2+) as cofactor.

May participate in a redox cascade for the formation of disulfide bonds in viral proteins. The protein is Protein A151R of African swine fever virus (strain Badajoz 1971 Vero-adapted) (Ba71V).